A 74-amino-acid polypeptide reads, in one-letter code: ATP synthase subunit c (74 aa).

2 consecutive transmembrane segments (helical) span residues 8–28 (FIGV…VSNI) and 52–72 (IGAG…MLLI).

It belongs to the ATPase C chain family. In terms of assembly, F-type ATPases have 2 components, F(1) - the catalytic core - and F(0) - the membrane proton channel. F(1) has five subunits: alpha(3), beta(3), gamma(1), delta(1), epsilon(1). F(0) has three main subunits: a(1), b(2) and c(10-14). The alpha and beta chains form an alternating ring which encloses part of the gamma chain. F(1) is attached to F(0) by a central stalk formed by the gamma and epsilon chains, while a peripheral stalk is formed by the delta and b chains.

The protein localises to the cell inner membrane. F(1)F(0) ATP synthase produces ATP from ADP in the presence of a proton or sodium gradient. F-type ATPases consist of two structural domains, F(1) containing the extramembraneous catalytic core and F(0) containing the membrane proton channel, linked together by a central stalk and a peripheral stalk. During catalysis, ATP synthesis in the catalytic domain of F(1) is coupled via a rotary mechanism of the central stalk subunits to proton translocation. In terms of biological role, key component of the F(0) channel; it plays a direct role in translocation across the membrane. A homomeric c-ring of between 10-14 subunits forms the central stalk rotor element with the F(1) delta and epsilon subunits. This is ATP synthase subunit c from Rickettsia canadensis (strain McKiel).